Reading from the N-terminus, the 203-residue chain is Outer-membrane lipoprotein carrier protein (203 aa).

The first 21 residues, Met-1–Ala-21, serve as a signal peptide directing secretion.

It belongs to the LolA family. Monomer.

The protein resides in the periplasm. In terms of biological role, participates in the translocation of lipoproteins from the inner membrane to the outer membrane. Only forms a complex with a lipoprotein if the residue after the N-terminal Cys is not an aspartate (The Asp acts as a targeting signal to indicate that the lipoprotein should stay in the inner membrane). The polypeptide is Outer-membrane lipoprotein carrier protein (Klebsiella pneumoniae subsp. pneumoniae (strain ATCC 700721 / MGH 78578)).